The chain runs to 327 residues: Zinc transport protein ZntB (327 aa).

The Cytoplasmic portion of the chain corresponds to 1 to 271 (MESFAGKELQ…AMNRRTYTMS (271 aa)). A helical membrane pass occupies residues 272–292 (LLAMVFLPTTFLTGLFGVNLG). Residues 293 to 300 (GIPGGDAP) lie on the Periplasmic side of the membrane. The helical transmembrane segment at 301 to 321 (FGFFTFCLMLVILVGGVAWWL) threads the bilayer. Topologically, residues 322–327 (KRSKWL) are cytoplasmic.

It belongs to the CorA metal ion transporter (MIT) (TC 1.A.35) family.

It localises to the cell inner membrane. It catalyses the reaction Zn(2+)(out) + H(+)(out) = Zn(2+)(in) + H(+)(in). Zinc transporter. Acts as a Zn(2+):proton symporter, which likely mediates zinc ion uptake. This Pectobacterium carotovorum subsp. carotovorum (strain PC1) protein is Zinc transport protein ZntB.